A 125-amino-acid chain; its full sequence is Large ribosomal subunit protein bL12 (125 aa).

The protein belongs to the bacterial ribosomal protein bL12 family. In terms of assembly, homodimer. Part of the ribosomal stalk of the 50S ribosomal subunit. Forms a multimeric L10(L12)X complex, where L10 forms an elongated spine to which 2 to 4 L12 dimers bind in a sequential fashion. Binds GTP-bound translation factors.

In terms of biological role, forms part of the ribosomal stalk which helps the ribosome interact with GTP-bound translation factors. Is thus essential for accurate translation. The protein is Large ribosomal subunit protein bL12 of Nitrobacter winogradskyi (strain ATCC 25391 / DSM 10237 / CIP 104748 / NCIMB 11846 / Nb-255).